The following is a 298-amino-acid chain: MTNAHYIGRFAPSPSGELHFGSLIAALGSYLRARSQHGIWRVRIEDIDPPREVPGAAETILRQLEHYGLHWDGDILWQSQRHDAYRDALAWLRQQNLSYYCTCPRARIQRIGGVYDGHCRTLQHGPENAAVRIKQFSPVMQFHDVLRGDIQADPLLAREDFIIHRRDGLFAYNLAVVVDDHFQGVTEIVRGADLIEPTVRQISLYQQFGWRAPDYIHLPLALNEQGAKLSKQNHAPALPEGDPRPVLIAALRFLGQNATAQWQDMHTDELLQYAVDNWTLTTVPESASVNPAFSNASC.

L-glutamate is bound by residues 9–13 (RFAPS) and Glu45. The short motif at 12–22 (PSPSGELHFGS) is the 'HIGH' region element. Zn(2+)-binding residues include Cys101, Cys103, Tyr115, and Cys119. Residues Tyr172 and Arg190 each contribute to the L-glutamate site. Residues 228–232 (KLSKQ) carry the 'KMSKS' region motif. An ATP-binding site is contributed by Lys231.

It belongs to the class-I aminoacyl-tRNA synthetase family. GluQ subfamily. Zn(2+) serves as cofactor.

In terms of biological role, catalyzes the tRNA-independent activation of glutamate in presence of ATP and the subsequent transfer of glutamate onto a tRNA(Asp). Glutamate is transferred on the 2-amino-5-(4,5-dihydroxy-2-cyclopenten-1-yl) moiety of the queuosine in the wobble position of the QUC anticodon. The chain is Glutamyl-Q tRNA(Asp) synthetase from Citrobacter koseri (strain ATCC BAA-895 / CDC 4225-83 / SGSC4696).